The chain runs to 649 residues: Extracellular metalloproteinase 4 (649 aa).

An N-terminal signal peptide occupies residues 1–18; the sequence is MHGLLLAGLLALPSNVLG. A propeptide spanning residues 19 to 260 is cleaved from the precursor; sequence HPAEPPNSVN…VHGVVDYVAS (242 aa). Histidine 443 provides a ligand contact to Zn(2+). Glutamate 444 is a catalytic residue. Histidine 447 contributes to the Zn(2+) binding site. 2 N-linked (GlcNAc...) asparagine glycosylation sites follow: asparagine 494 and asparagine 609.

It belongs to the peptidase M36 family. The cofactor is Zn(2+).

It localises to the secreted. In terms of biological role, secreted metalloproteinase probably acting as a virulence factor. In Arthroderma otae (strain ATCC MYA-4605 / CBS 113480) (Microsporum canis), this protein is Extracellular metalloproteinase 4 (MEP4).